We begin with the raw amino-acid sequence, 312 residues long: uncharacterized protein (312 aa).

The next 10 membrane-spanning stretches (helical) occupy residues 11–31 (IAAI…KIAL), 46–66 (IAFA…SIRV), 72–92 (ILPL…FGLV), 98–118 (EAGI…AYVL), 128–148 (GFTV…GVDV), 155–171 (GSLL…MYNT), 183–203 (TELT…IALV), 221–241 (PGFV…TSFL), 254–274 (MSAF…VILN), and 277–297 (LAWY…GSNI). EamA domains follow at residues 18–142 (FIIG…FIFV) and 164–297 (LSSA…GSNI).

This sequence belongs to the EamA transporter family.

The protein localises to the cell membrane. This is an uncharacterized protein from Bacillus subtilis (strain 168).